The sequence spans 172 residues: Adenine phosphoribosyltransferase (172 aa).

This sequence belongs to the purine/pyrimidine phosphoribosyltransferase family. Homodimer.

It is found in the cytoplasm. It catalyses the reaction AMP + diphosphate = 5-phospho-alpha-D-ribose 1-diphosphate + adenine. Its pathway is purine metabolism; AMP biosynthesis via salvage pathway; AMP from adenine: step 1/1. In terms of biological role, catalyzes a salvage reaction resulting in the formation of AMP, that is energically less costly than de novo synthesis. This chain is Adenine phosphoribosyltransferase, found in Roseiflexus sp. (strain RS-1).